A 182-amino-acid chain; its full sequence is Peptidyl-tRNA hydrolase (182 aa).

A tRNA-binding site is contributed by Y14. H19 (proton acceptor) is an active-site residue. TRNA contacts are provided by Y65, N67, and N113.

The protein belongs to the PTH family. In terms of assembly, monomer.

It is found in the cytoplasm. It catalyses the reaction an N-acyl-L-alpha-aminoacyl-tRNA + H2O = an N-acyl-L-amino acid + a tRNA + H(+). In terms of biological role, hydrolyzes ribosome-free peptidyl-tRNAs (with 1 or more amino acids incorporated), which drop off the ribosome during protein synthesis, or as a result of ribosome stalling. Catalyzes the release of premature peptidyl moieties from peptidyl-tRNA molecules trapped in stalled 50S ribosomal subunits, and thus maintains levels of free tRNAs and 50S ribosomes. The polypeptide is Peptidyl-tRNA hydrolase (Rickettsia peacockii (strain Rustic)).